A 189-amino-acid chain; its full sequence is Ribosome maturation factor RimP (189 aa).

Belongs to the RimP family.

The protein localises to the cytoplasm. Required for maturation of 30S ribosomal subunits. The polypeptide is Ribosome maturation factor RimP (Mycobacteroides abscessus (strain ATCC 19977 / DSM 44196 / CCUG 20993 / CIP 104536 / JCM 13569 / NCTC 13031 / TMC 1543 / L948) (Mycobacterium abscessus)).